Here is a 288-residue protein sequence, read N- to C-terminus: Formamidopyrimidine-DNA glycosylase (288 aa).

Proline 2 (schiff-base intermediate with DNA) is an active-site residue. The Proton donor role is filled by glutamate 3. The active-site Proton donor; for beta-elimination activity is lysine 59. Histidine 93, arginine 112, and lysine 168 together coordinate DNA. The FPG-type zinc-finger motif lies at asparagine 254–arginine 288. Residue arginine 278 is the Proton donor; for delta-elimination activity of the active site.

The protein belongs to the FPG family. Monomer. Requires Zn(2+) as cofactor.

The enzyme catalyses Hydrolysis of DNA containing ring-opened 7-methylguanine residues, releasing 2,6-diamino-4-hydroxy-5-(N-methyl)formamidopyrimidine.. It carries out the reaction 2'-deoxyribonucleotide-(2'-deoxyribose 5'-phosphate)-2'-deoxyribonucleotide-DNA = a 3'-end 2'-deoxyribonucleotide-(2,3-dehydro-2,3-deoxyribose 5'-phosphate)-DNA + a 5'-end 5'-phospho-2'-deoxyribonucleoside-DNA + H(+). Involved in base excision repair of DNA damaged by oxidation or by mutagenic agents. Acts as a DNA glycosylase that recognizes and removes damaged bases. Has a preference for oxidized purines, such as 7,8-dihydro-8-oxoguanine (8-oxoG). Has AP (apurinic/apyrimidinic) lyase activity and introduces nicks in the DNA strand. Cleaves the DNA backbone by beta-delta elimination to generate a single-strand break at the site of the removed base with both 3'- and 5'-phosphates. This chain is Formamidopyrimidine-DNA glycosylase, found in Corynebacterium jeikeium (strain K411).